A 350-amino-acid chain; its full sequence is Guanine nucleotide-binding protein G(t) subunit alpha-1 (350 aa).

Residues 1–21 are disordered; it reads MGAGASAEEKHSRELEKKLKE. Gly2 carries the N-myristoyl glycine lipid modification. Residues 7 to 21 are compositionally biased toward basic and acidic residues; the sequence is AEEKHSRELEKKLKE. A G-alpha domain is found at 28–350; the sequence is RTVKLLLLGA…KENLKDCGLF (323 aa). The G1 motif stretch occupies residues 31-44; sequence KLLLLGAGESGKST. 36-43 lines the GTP pocket; the sequence is GAGESGKS. Ser43 is a binding site for Mg(2+). Tyr142 carries the post-translational modification Phosphotyrosine. Residues Asp146, 171 to 177, Gly199, 265 to 268, and Ala322 contribute to the GTP site; these read LRSRVKT and NKKD. The interval 169-177 is G2 motif; it reads DVLRSRVKT. Position 177 (Thr177) interacts with Mg(2+). A G3 motif region spans residues 192 to 201; sequence FRMFDVGGQR. Residues 261–268 are G4 motif; it reads VLFLNKKD. Positions 320–325 are G5 motif; the sequence is TCATDT. The interaction with RHO stretch occupies residues 340–350; the sequence is IKENLKDCGLF.

As to quaternary structure, heterotrimeric G proteins are composed of 3 subunits alpha, beta and gamma. The alpha chain contains the guanine nucleotide binding site. Interacts with RHO. Interacts with RGS9 and PDE6G. Interacts (when myristoylated) with UNC119; interaction is required for localization in sensory neurons. As to expression, rod.

The protein localises to the cell projection. Its subcellular location is the cilium. The protein resides in the photoreceptor outer segment. It localises to the membrane. It is found in the photoreceptor inner segment. Functionally, functions as a signal transducer for the rod photoreceptor RHO. Required for normal RHO-mediated light perception by the retina. Guanine nucleotide-binding proteins (G proteins) function as transducers downstream of G protein-coupled receptors (GPCRs), such as the photoreceptor RHO. The alpha chain contains the guanine nucleotide binding site and alternates between an active, GTP-bound state and an inactive, GDP-bound state. Activated RHO promotes GDP release and GTP binding. Signaling is mediated via downstream effector proteins, such as cGMP-phosphodiesterase. In Bos taurus (Bovine), this protein is Guanine nucleotide-binding protein G(t) subunit alpha-1 (GNAT1).